The sequence spans 388 residues: Histone H2A.Y (388 aa).

3 LRR repeats span residues 54-75, 76-96, and 100-121; these read SLQMLTINDCLISDLTNFPHVP, SLIRLDLVFNKITGDQLQYLR, and HLQTLMLGANQIEEIEDLKRLG. The 39-residue stretch at 134-172 folds into the LRRCT domain; the sequence is NPVVNTNNYRNLVFNLFPSLVILDTLDKNGIDQEKAALD. The interval 256–279 is disordered; sequence RKAPASRNGGVPSKAGKGKMNAFS.

This sequence belongs to the histone H2A family. In terms of assembly, the nucleosome is a histone octamer containing two molecules each of H2A, H2B, H3 and H4 assembled in one H3-H4 heterotetramer and two H2A-H2B heterodimers. The octamer wraps approximately 147 bp of DNA.

It localises to the nucleus. It is found in the chromosome. In terms of biological role, variant histone H2A which replaces conventional H2A in a subset of nucleosomes. Nucleosomes wrap and compact DNA into chromatin, limiting DNA accessibility to the cellular machineries which require DNA as a template. Histones thereby play a central role in transcription regulation, DNA repair, DNA replication and chromosomal stability. DNA accessibility is regulated via a complex set of post-translational modifications of histones, also called histone code, and nucleosome remodeling. The polypeptide is Histone H2A.Y (HTAY) (Tetrahymena thermophila (strain SB210)).